We begin with the raw amino-acid sequence, 500 residues long: MALRVTADVWLARPWQCLHRTRALGTTATLAPKTLQPFEAIPQYSRNKWLKMIQILREQGQENLHLEMHQVFRELGPIFRHSVGKTQIVSVMLPEDAEKLHQVESMLPRRMHLEPWVAHRELRGLRRGVFLLNGPEWRLNRLRLNRNVLSPKAVQKFVPMVDMVARDFLETLKEKVLQNARGSLTMDVQQSLFNYTIEASNFALFGERLGLLGHDLSPGSLKFIHALHSMFKSTSQLLFLPKSLTRWTSTRVWKEHFDAWDVISEYANRCIWKVHQELRLGSSQTYSGIVAELISQGSLPLDAIKANSMELTAGSVDTTAIPLVMTLFELARNPDVQKALRQESLAAEASIAANPQKAMSDLPLLRAALKETLRLYPVGGFLERILSSDLVLQNYHVPAGTLVLLYLYSMGRNPAVFPRPERYMPQRWLERKRSFQHLAFGFGVRQCLGRRLAEVEMMLLLHHILKTFQVETLRQEDVQMAYRFVLMPSSSPVLTFRPVS.

The transit peptide at 1 to 24 directs the protein to the mitochondrion; it reads MALRVTADVWLARPWQCLHRTRAL. Phe381 provides a ligand contact to 21-hydroxyprogesterone. Position 447 (Cys447) interacts with heme.

The protein belongs to the cytochrome P450 family. It depends on heme as a cofactor.

It localises to the mitochondrion inner membrane. It carries out the reaction a steroid + 2 reduced [adrenodoxin] + O2 + 2 H(+) = an 11beta-hydroxysteroid + 2 oxidized [adrenodoxin] + H2O. The enzyme catalyses 21-hydroxyprogesterone + 2 reduced [adrenodoxin] + O2 + 2 H(+) = corticosterone + 2 oxidized [adrenodoxin] + H2O. It catalyses the reaction corticosterone + 2 reduced [adrenodoxin] + O2 + 2 H(+) = 18-hydroxycorticosterone + 2 oxidized [adrenodoxin] + H2O. The catalysed reaction is 18-hydroxycorticosterone + 2 reduced [adrenodoxin] + O2 + 2 H(+) = aldosterone + 2 oxidized [adrenodoxin] + 2 H2O. It carries out the reaction 11-deoxycortisol + 2 reduced [adrenodoxin] + O2 + 2 H(+) = cortisol + 2 oxidized [adrenodoxin] + H2O. The enzyme catalyses 21-hydroxyprogesterone + 2 reduced [adrenodoxin] + O2 + 2 H(+) = 18-hydroxy-11-deoxycorticosterone + 2 oxidized [adrenodoxin] + H2O. It catalyses the reaction cortisol + 2 reduced [adrenodoxin] + O2 + 2 H(+) = 18-hydroxycortisol + 2 oxidized [adrenodoxin] + H2O. The catalysed reaction is 18-hydroxycortisol + 2 reduced [adrenodoxin] + O2 + 2 H(+) = 18-oxocortisol + 2 oxidized [adrenodoxin] + 2 H2O. It participates in steroid biosynthesis. Its function is as follows. A cytochrome P450 monooxygenase that catalyzes the biosynthesis of aldosterone, the main mineralocorticoid in the human body responsible for salt and water homeostasis, thus involved in blood pressure regulation, arterial hypertension, and the development of heart failure. Catalyzes three sequential oxidative reactions of 11-deoxycorticosterone (21-hydroxyprogesterone), namely 11-beta hydroxylation, followed by two successive oxidations at C18 yielding 18-hydroxy and then 18-oxo intermediates (that would not leave the enzyme active site during the consecutive hydroxylation reactions), ending with the formation of aldosterone. Can also produce 18-hydroxycortisol and 18-oxocortisol, derived from successive oxidations of cortisol at C18, normally found at very low levels, but significantly increased in primary aldosteronism, the most common form of secondary hypertension. Mechanistically, uses molecular oxygen inserting one oxygen atom into a substrate and reducing the second into a water molecule. Two electrons are provided by NADPH via a two-protein mitochondrial transfer system comprising flavoprotein FDXR (adrenodoxin/ferredoxin reductase) and nonheme iron-sulfur protein FDX1 or FDX2 (adrenodoxin/ferredoxin). Could also be involved in the androgen metabolic pathway. This Mus musculus (Mouse) protein is Cytochrome P450 11B2, mitochondrial (Cyp11b2).